Here is a 455-residue protein sequence, read N- to C-terminus: Gamma-glutamyl phosphate reductase (455 aa).

The protein belongs to the gamma-glutamyl phosphate reductase family.

It is found in the cytoplasm. It catalyses the reaction L-glutamate 5-semialdehyde + phosphate + NADP(+) = L-glutamyl 5-phosphate + NADPH + H(+). Its pathway is amino-acid biosynthesis; L-proline biosynthesis; L-glutamate 5-semialdehyde from L-glutamate: step 2/2. Catalyzes the NADPH-dependent reduction of L-glutamate 5-phosphate into L-glutamate 5-semialdehyde and phosphate. The product spontaneously undergoes cyclization to form 1-pyrroline-5-carboxylate. This Synechococcus sp. (strain JA-3-3Ab) (Cyanobacteria bacterium Yellowstone A-Prime) protein is Gamma-glutamyl phosphate reductase.